The sequence spans 119 residues: Beta-2-microglobulin (119 aa).

An N-terminal signal peptide occupies residues 1–20; that stretch reads MAPFVAIALLVLLSLSGLEA. Positions 25 to 114 constitute an Ig-like C1-type domain; that stretch reads PKIQVYSRHP…VTFSTPKTVK (90 aa). A disulfide bridge connects residues cysteine 45 and cysteine 100.

It belongs to the beta-2-microglobulin family. As to quaternary structure, heterodimer of an alpha chain and a beta chain. Beta-2-microglobulin is the beta-chain of major histocompatibility complex class I molecules.

It localises to the secreted. In terms of biological role, component of the class I major histocompatibility complex (MHC). Involved in the presentation of peptide antigens to the immune system. This is Beta-2-microglobulin (B2M) from Cheracebus torquatus (Collared titi monkey).